Consider the following 455-residue polypeptide: Single-stranded DNA-binding protein homolog sam-10 (455 aa).

The LisH domain maps to 19–51 (ARDRLTSYIYEYLQQTGASKTAETFKEEVLSTN). 4 disordered regions span residues 217–249 (PPPG…LNSP), 281–302 (SDHQ…TAGG), 314–343 (GPGS…HQPK), and 357–442 (EALT…NGEI). Low complexity-rich tracts occupy residues 288 to 298 (AGPAAAAPGAT) and 321 to 336 (VATT…SSIG). The span at 396–406 (HSVNNNVNPGT) shows a compositional bias: polar residues. Residues 407–421 (PGSNPLSNPMSNPPL) show a composition bias toward low complexity.

Ubiquitously expressed with higher expression in the head and tail ganglia, the vulva and PLM neurons.

The protein resides in the cytoplasm. Its subcellular location is the nucleus. In terms of biological role, involved cell autonomously in PLM neuron pre-synaptic differentiation by negatively regulating prk-2 expression and in neurite branch positioning. The chain is Single-stranded DNA-binding protein homolog sam-10 from Caenorhabditis elegans.